Reading from the N-terminus, the 376-residue chain is MRRLNKKKALNFVRELDAFPKVPESYVETTASGGTVSLLAFTAMALLAFFEFFVYRDTWMKYEYEVDKDFTSKLRINIDITVAMRCQFVGADVLDLAETMVASDGLVYEPVVFDLSPQQRLWHRTLLLIQGRLREEHSLQDVLFKNVMKGSPTALPPREDDPNQPLNACRIHGHLYVNKVAGNFHITVGKAIPHPRGHAHLAALVSHETYNFSHRIDHLSFGEEIPGILNPLDGTEKVSADHNQMFQYFITIVPTKLQTYKVYADTHQYSVTERERVINHAAGSHGVSGIFMKYDISSLMVKVTEQHMPFWQFLVRLCGIIGGIFSTTGMLHNLVGFCVDVVCCRFKLGVYKPKSMSDFDGQINSLTPLLSENAEQ.

Topologically, residues 1–33 (MRRLNKKKALNFVRELDAFPKVPESYVETTASG) are cytoplasmic. The helical transmembrane segment at 34-54 (GTVSLLAFTAMALLAFFEFFV) threads the bilayer. Residues 55–318 (YRDTWMKYEY…PFWQFLVRLC (264 aa)) lie on the Lumenal side of the membrane. Residues 319 to 339 (GIIGGIFSTTGMLHNLVGFCV) traverse the membrane as a helical segment. At 340 to 376 (DVVCCRFKLGVYKPKSMSDFDGQINSLTPLLSENAEQ) the chain is on the cytoplasmic side.

The protein belongs to the ERGIC family.

It is found in the endoplasmic reticulum-Golgi intermediate compartment membrane. The protein localises to the golgi apparatus. It localises to the cis-Golgi network membrane. The protein resides in the endoplasmic reticulum membrane. In terms of biological role, possible role in transport between endoplasmic reticulum and Golgi. The sequence is that of Endoplasmic reticulum-Golgi intermediate compartment protein 2 (ergic2) from Danio rerio (Zebrafish).